The sequence spans 304 residues: ATP phosphoribosyltransferase (304 aa).

It belongs to the ATP phosphoribosyltransferase family. Long subfamily. Mg(2+) is required as a cofactor.

Its subcellular location is the cytoplasm. The enzyme catalyses 1-(5-phospho-beta-D-ribosyl)-ATP + diphosphate = 5-phospho-alpha-D-ribose 1-diphosphate + ATP. Its pathway is amino-acid biosynthesis; L-histidine biosynthesis; L-histidine from 5-phospho-alpha-D-ribose 1-diphosphate: step 1/9. Feedback inhibited by histidine. Functionally, catalyzes the condensation of ATP and 5-phosphoribose 1-diphosphate to form N'-(5'-phosphoribosyl)-ATP (PR-ATP). Has a crucial role in the pathway because the rate of histidine biosynthesis seems to be controlled primarily by regulation of HisG enzymatic activity. The sequence is that of ATP phosphoribosyltransferase from Xanthomonas oryzae pv. oryzae (strain MAFF 311018).